The following is a 909-amino-acid chain: Nitrate reductase [NADH] (909 aa).

Cysteine 187 contributes to the Mo-molybdopterin binding site. The Cytochrome b5 heme-binding domain maps to 535-610 (SKMYSMSEVK…LEDFRIGELI (76 aa)). The heme site is built by histidine 570 and histidine 593. An FAD-binding FR-type domain is found at 652–764 (REKIPCKLVD…KGPLGHIEYQ (113 aa)). FAD contacts are provided by residues 704 to 707 (RAYT), 721 to 725 (VVKIY), phenylalanine 726, phenylalanine 733, 738 to 740 (QMS), and threonine 791.

It belongs to the nitrate reductase family. Homodimer. The cofactor is FAD. Requires heme as cofactor. Mo-molybdopterin serves as cofactor.

The catalysed reaction is nitrite + NAD(+) + H2O = nitrate + NADH + H(+). With respect to regulation, regulated by the nitrogen source and controlled by the circadian rhythm. In terms of biological role, nitrate reductase is a key enzyme involved in the first step of nitrate assimilation in plants, fungi and bacteria. This is Nitrate reductase [NADH] (NIA) from Petunia hybrida (Petunia).